The chain runs to 185 residues: Photosystem I assembly protein Ycf4 (185 aa).

The next 2 helical transmembrane spans lie at 22–42 (FFFASILFGGALGFFLVGFSS) and 57–77 (IIFVPQGIVMCFYGIAGLFFS).

This sequence belongs to the Ycf4 family.

It localises to the plastid. It is found in the chloroplast thylakoid membrane. Functionally, seems to be required for the assembly of the photosystem I complex. The sequence is that of Photosystem I assembly protein Ycf4 from Welwitschia mirabilis (Tree tumbo).